A 427-amino-acid polypeptide reads, in one-letter code: MIDYKKILGDYTPDYEESLRLKCIENGIIKKLNDIISSRNIDAEPVSVGSYSKGTNLKNSDLDIFIVFSKKYPKNEMESIGLSLGHYILENGVEKYAEHPYVSGYIENVKIDIVPAYKIEPGQRIVSTVDRTPLHTKYVIENTDENLRNDIRLLKIFMKANNVYGSEVSKAGFSGYLCEILVINFKSFDAVIKYFSKLKGRLIIPENSGKKFQEPVVIVDPVDPTRNAGAAVSLENLSRMKIASKLFLLNKNESFFYPREISPRYHKRGTCIYIITLKRPDIIDDIIYPQVFRFERQIFNIADRYGFMPVSSEINVDNNIEILIELQRDVLPDVSKHAGPPVDSDESINFINVWKDRALRGPYIERDRLYVDSETRIKSFYDALNLELKKMDIGKNLNKLKDGIKIIKYNNSDFNVVKKFFSKDIFH.

ATP-binding residues include Ser50 and Lys53. CTP-binding residues include Ser50 and Lys53. Mg(2+) contacts are provided by Asp61, Asp63, and Asp112. The ATP site is built by His135, Lys155, and Tyr164. His135, Lys155, and Tyr164 together coordinate CTP.

It belongs to the tRNA nucleotidyltransferase/poly(A) polymerase family. Archaeal CCA-adding enzyme subfamily. In terms of assembly, homodimer. It depends on Mg(2+) as a cofactor.

The enzyme catalyses a tRNA precursor + 2 CTP + ATP = a tRNA with a 3' CCA end + 3 diphosphate. It catalyses the reaction a tRNA with a 3' CCA end + 2 CTP + ATP = a tRNA with a 3' CCACCA end + 3 diphosphate. Functionally, catalyzes the addition and repair of the essential 3'-terminal CCA sequence in tRNAs without using a nucleic acid template. Adds these three nucleotides in the order of C, C, and A to the tRNA nucleotide-73, using CTP and ATP as substrates and producing inorganic pyrophosphate. tRNA 3'-terminal CCA addition is required both for tRNA processing and repair. Also involved in tRNA surveillance by mediating tandem CCA addition to generate a CCACCA at the 3' terminus of unstable tRNAs. While stable tRNAs receive only 3'-terminal CCA, unstable tRNAs are marked with CCACCA and rapidly degraded. The chain is CCA-adding enzyme from Picrophilus torridus (strain ATCC 700027 / DSM 9790 / JCM 10055 / NBRC 100828 / KAW 2/3).